The chain runs to 375 residues: Alcohol dehydrogenase 1 (375 aa).

At Ser2 the chain carries N-acetylserine. Zn(2+)-binding residues include Cys47, His68, Cys98, Cys101, Cys104, Cys112, and Cys175. NAD(+)-binding positions include 200-205 (GLGGVG), Asp224, and Lys229. Lys234 bears the N6-succinyllysine mark. 293–295 (VGV) is a binding site for NAD(+). N6-succinyllysine is present on Lys340. An NAD(+)-binding site is contributed by Arg370.

It belongs to the zinc-containing alcohol dehydrogenase family. In terms of assembly, homodimer. Requires Zn(2+) as cofactor.

Its subcellular location is the cytoplasm. The catalysed reaction is a primary alcohol + NAD(+) = an aldehyde + NADH + H(+). The enzyme catalyses a secondary alcohol + NAD(+) = a ketone + NADH + H(+). This is Alcohol dehydrogenase 1 (ADH1) from Oryctolagus cuniculus (Rabbit).